The primary structure comprises 1044 residues: Integrin alpha-8 (1044 aa).

An N-terminal signal peptide occupies residues 1-23 (MPRRQPPRPLLLLSALLCAPASA). Topologically, residues 24–991 (FNLDEEKLTV…WSTPNVSFVI (968 aa)) are extracellular. 7 FG-GAP repeats span residues 28–90 (EEKL…RCRQ), 104–165 (NGTR…AYAE), 170–222 (RNSN…ITNY), 236–288 (QTGV…SSDL), 289–354 (TFIQ…FLFR), 355–413 (DPQI…GLKT), and 417–480 (QVLN…LNPM). N-linked (GlcNAc...) asparagine glycosylation is present at Asn66. Cys81 and Cys88 form a disulfide bridge. N-linked (GlcNAc...) asparagine glycosylation is present at Asn104. Cys132 and Cys153 form a disulfide bridge. N-linked (GlcNAc...) asparagine glycosylation is present at Asn159. Cys169 and Cys182 are disulfide-bonded. Asn221 carries N-linked (GlcNAc...) asparagine glycosylation. Ca(2+) is bound by residues Glu257, Thr259, Asp261, and Glu265. N-linked (GlcNAc...) asparagine glycosylation is found at Asn284 and Asn293. Ca(2+) contacts are provided by Asp311, Asn313, Asp315, Leu317, Asp319, Asp377, Asn379, Asp381, Tyr383, and Asp385. The Cell attachment site signature appears at 437-439 (RGD). Positions 441, 443, 445, 447, and 449 each coordinate Ca(2+). N-linked (GlcNAc...) asparagine glycosylation occurs at Asn486. Intrachain disulfides connect Cys489–Cys500 and Cys506–Cys562. Asn587 carries an N-linked (GlcNAc...) asparagine glycan. Disulfide bonds link Cys623-Cys629 and Cys695-Cys708. Residues Asn701, Asn719, Asn751, Asn762, Asn818, Asn877, and Asn904 are each glycosylated (N-linked (GlcNAc...) asparagine). 2 disulfides stabilise this stretch: Cys849–Cys905 and Cys910–Cys915. Residues Asn952 and Asn986 are each glycosylated (N-linked (GlcNAc...) asparagine). A helical transmembrane segment spans residues 992-1015 (PLWVIILAIMLGLLVLAVLTLALW). Over 1016–1044 (KCGFFDRARPPQDDMADREQLTNNKTTDA) the chain is Cytoplasmic.

The protein belongs to the integrin alpha chain family. Heterodimer of an alpha and a beta subunit. The alpha subunit is composed of a heavy and a light chain linked by a disulfide bond. Alpha-8 associates with beta-1. In terms of tissue distribution, prominently expressed on axons and on cells in contact with basal laminae in embryos.

The protein localises to the membrane. It localises to the cell membrane. In terms of biological role, integrin alpha-8/beta-1 functions in the genesis of kidney and probably of other organs by regulating the recruitment of mesenchymal cells into epithelial structures. It recognizes the sequence R-G-D in a wide array of ligands including TNC, FN1, SPP1, TGFB1, TGFB3 and VTN. NPNT is probably its functional ligand in kidney genesis. Neuronal receptor for TNC it mediates cell-cell interactions and regulates neurite outgrowth of sensory and motor neurons. The sequence is that of Integrin alpha-8 (ITGA8) from Gallus gallus (Chicken).